Here is a 104-residue protein sequence, read N- to C-terminus: Large ribosomal subunit protein bL21 (104 aa).

This sequence belongs to the bacterial ribosomal protein bL21 family. In terms of assembly, part of the 50S ribosomal subunit. Contacts protein L20.

In terms of biological role, this protein binds to 23S rRNA in the presence of protein L20. The polypeptide is Large ribosomal subunit protein bL21 (Francisella philomiragia subsp. philomiragia (strain ATCC 25017 / CCUG 19701 / FSC 153 / O#319-036)).